The chain runs to 258 residues: Tegument protein VP22 (258 aa).

Positions 66–143 (VQPAARGRDR…RAPPGANAVA (78 aa)) are disordered. Over residues 77–118 (AAAGTTVAAPAAAPARRSSSRASSRPPRAAADPPVLRPATRG) the composition is skewed to low complexity. The Nuclear localization signal signature appears at 131–134 (PRPR). A Nuclear export signal motif is present at residues 204–216 (LDRMLKSAAIRIL). The interval 234–258 (RAQRPAARGSTSGGESRLRGERARP) is disordered. The segment covering 249 to 258 (SRLRGERARP) has biased composition (basic and acidic residues).

Belongs to the alphaherpesvirinae VP22 tegument protein family. In terms of assembly, interacts with gE (via C-terminus); this interaction is necessary for the recruitment of VP22 to the Golgi and its packaging into virions. Interacts with gM (via C-terminus). Interacts with VP16; this interaction allows the formation of a tripartite complex composed of VP16, VP22 and UL41/VHS. Interacts with the capsid-binding protein UL16. Interacts with host CGAS. Post-translationally, highly phosphorylated in the host cell. Packaging is selective for underphosphorylated forms.

It is found in the virion tegument. The protein resides in the host cytoplasm. Its subcellular location is the host nucleus. It localises to the host Golgi apparatus. Tegument protein that plays different roles during the time course of infection. Participates in both the accumulation of viral mRNAs and viral protein translation at late time of infection. Modulates the RNase activity of the virion host shutoff protein UL41 probably to ensure necessary levels of key cellular mRNAs and proteins. Plays a role in microtubule reorganization that occurs after viral infection by stabilizing microtubule network. Plays a role in the inhibition of host innate immune system by targeting the CGAS enzymatic activity which is the principal cytosolic DNA sensor that detects invading viral DNA. Acts by mediating disruption of liquid-like droplets in which CGAS is activated, thereby preventing CGAS activity. This Bovine herpesvirus 1.1 (strain Cooper) (BoHV-1) protein is Tegument protein VP22.